A 577-amino-acid polypeptide reads, in one-letter code: Arginine--tRNA ligase (577 aa).

Positions 122 to 132 (PNVAKEMHVGH) match the 'HIGH' region motif.

The protein belongs to the class-I aminoacyl-tRNA synthetase family. In terms of assembly, monomer.

It localises to the cytoplasm. The enzyme catalyses tRNA(Arg) + L-arginine + ATP = L-arginyl-tRNA(Arg) + AMP + diphosphate. The chain is Arginine--tRNA ligase from Escherichia coli O9:H4 (strain HS).